The sequence spans 248 residues: Probable transcriptional regulatory protein Plav_2114 (248 aa).

It belongs to the TACO1 family.

The protein resides in the cytoplasm. This is Probable transcriptional regulatory protein Plav_2114 from Parvibaculum lavamentivorans (strain DS-1 / DSM 13023 / NCIMB 13966).